Here is a 207-residue protein sequence, read N- to C-terminus: Guanylate kinase (207 aa).

Residues 10–187 (GFFIVLSAAS…AVERLQVIYQ (178 aa)) form the Guanylate kinase-like domain. 17–24 (AASGTGKT) is a binding site for ATP.

This sequence belongs to the guanylate kinase family.

The protein resides in the cytoplasm. It catalyses the reaction GMP + ATP = GDP + ADP. Functionally, essential for recycling GMP and indirectly, cGMP. This chain is Guanylate kinase, found in Syntrophus aciditrophicus (strain SB).